The primary structure comprises 420 residues: 3-isopropylmalate dehydratase large subunit (420 aa).

[4Fe-4S] cluster contacts are provided by cysteine 300, cysteine 360, and cysteine 363.

Belongs to the aconitase/IPM isomerase family. LeuC type 2 subfamily. As to quaternary structure, heterodimer of LeuC and LeuD. [4Fe-4S] cluster is required as a cofactor.

It catalyses the reaction (2R,3S)-3-isopropylmalate = (2S)-2-isopropylmalate. It participates in amino-acid biosynthesis; L-leucine biosynthesis; L-leucine from 3-methyl-2-oxobutanoate: step 2/4. Its function is as follows. Catalyzes the isomerization between 2-isopropylmalate and 3-isopropylmalate, via the formation of 2-isopropylmaleate. In Halothermothrix orenii (strain H 168 / OCM 544 / DSM 9562), this protein is 3-isopropylmalate dehydratase large subunit.